A 346-amino-acid polypeptide reads, in one-letter code: Putative agmatine deiminase (346 aa).

Residue Cys333 is the Amidino-cysteine intermediate of the active site.

The protein belongs to the agmatine deiminase family.

It carries out the reaction agmatine + H2O = N-carbamoylputrescine + NH4(+). This chain is Putative agmatine deiminase, found in Legionella pneumophila (strain Paris).